A 722-amino-acid polypeptide reads, in one-letter code: Threonine--tRNA ligase 1, cytoplasmic (722 aa).

Over residues 1 to 10 (MSQEKASSPS) the composition is skewed to polar residues. The disordered stretch occupies residues 1 to 48 (MSQEKASSPSGKMDGEKPVDASEEKRKEGGKKKSKDGGGDGGRAELNP). Positions 13–27 (MDGEKPVDASEEKRK) are enriched in basic and acidic residues. The region spanning 78–142 (DSKPIKVTLP…ETDCTLELLK (65 aa)) is the TGS domain. Lysine 242 bears the N6-acetyllysine mark. Threonine 245 carries the phosphothreonine modification. Phosphotyrosine is present on tyrosine 297. A Phosphothreonine modification is found at threonine 452.

This sequence belongs to the class-II aminoacyl-tRNA synthetase family. Homodimer. ISGylated.

The protein localises to the cytoplasm. It catalyses the reaction tRNA(Thr) + L-threonine + ATP = L-threonyl-tRNA(Thr) + AMP + diphosphate + H(+). In terms of biological role, catalyzes the attachment of threonine to tRNA(Thr) in a two-step reaction: threonine is first activated by ATP to form Thr-AMP and then transferred to the acceptor end of tRNA(Thr). Also edits incorrectly charged tRNA(Thr) via its editing domain, at the post-transfer stage. The protein is Threonine--tRNA ligase 1, cytoplasmic (Tars1) of Mus musculus (Mouse).